The following is a 979-amino-acid chain: Collagen alpha-2(I) chain (979 aa).

The segment at 1–979 is disordered; sequence SGGFDFSFLP…FGYEGDFYRA (979 aa). A 4-hydroxyproline mark is found at P10, P13, P38, and P44. The span at 24 to 70 shows a compositional bias: low complexity; it reads LGPGPMGLMGPRGPPGASGAPGPQGFQGPAGEPGEPGQTGPAGARGP. K99 bears the 5-hydroxylysine; alternate mark. K99 is a glycosylation site (O-linked (Gal...) hydroxylysine; alternate). 4 stretches are compositionally biased toward low complexity: residues 147–176, 222–263, 272–282, and 312–331; these read VGAPGPAGARGSDGSVGPVGPAGPIGSAGP, PGAN…AGSK, SAGPQGPPGSS, and RAGVIGPAGARGASGPAGVR. 4-hydroxyproline occurs at positions 334 and 337. The span at 363–382 shows a compositional bias: low complexity; that stretch reads LPGIDGRPGPIGPAGARGEA. Over residues 427 to 436 the composition is skewed to gly residues; that stretch reads GVQGGKGEQG. A compositionally biased stretch (low complexity) spans 483 to 500; that stretch reads PGESGAVGPSGAIGSRGP. Gly residues predominate over residues 517-527; sequence GAPGGSGGLPG. Low complexity-rich tracts occupy residues 550–594 and 601–621; these read VGTT…PRGS and VGPAGPNGFAGPAGAAGQPGA. Positions 622-631 are enriched in basic and acidic residues; that stretch reads KGERGTKGPK. A compositionally biased stretch (low complexity) spans 639–649; the sequence is PTGPVGSAGPA. Gly residues predominate over residues 659–668; sequence GSRGDGGPPG. Low complexity predominate over residues 669–679; that stretch reads ATGFPGAAGRT. The segment covering 710–724 has biased composition (gly residues); the sequence is GPVGRGETGAGGPPG. Low complexity-rich tracts occupy residues 725-759 and 767-777; these read FTGEKGPSGEPGTAGPPGTAGPQGLLGAPGILGLP and LPGVAGAVGEP. A compositionally biased stretch (gly residues) spans 778–788; sequence GPLGIGPPGAR. The segment covering 840-855 has biased composition (low complexity); sequence EPGPVGSVGPVGALGP. Residues 865–876 show a composition bias toward basic and acidic residues; that stretch reads RGDKGEPGDKGP. A compositionally biased stretch (pro residues) spans 949–961; that stretch reads SGPPGPPGPPGPP.

Belongs to the fibrillar collagen family. As to quaternary structure, trimers of one alpha 2(I) and two alpha 1(I) chains. Interacts (via C-terminus) with TMEM131 (via PapD-L domain); the interaction is direct and is involved in assembly and TRAPPIII ER-to-Golgi transport complex-dependent secretion of collagen. Prolines at the third position of the tripeptide repeating unit (G-X-Y) are hydroxylated in some or all of the chains. In terms of tissue distribution, expressed in bones.

Its subcellular location is the secreted. It localises to the extracellular space. The protein resides in the extracellular matrix. In terms of biological role, type I collagen is a member of group I collagen (fibrillar forming collagen). The polypeptide is Collagen alpha-2(I) chain (Bradypus variegatus (Brown-throated three-fingered sloth)).